Consider the following 164-residue polypeptide: Xanthine-guanine phosphoribosyltransferase (164 aa).

5-phospho-alpha-D-ribose 1-diphosphate is bound by residues 41-42 (RG) and 98-106 (DDLTDTGKT). Aspartate 99 is a binding site for Mg(2+). Guanine contacts are provided by aspartate 102 and isoleucine 145. Residues aspartate 102 and isoleucine 145 each contribute to the xanthine site. GMP-binding positions include 102-106 (DTGKT) and 144-145 (WI).

It belongs to the purine/pyrimidine phosphoribosyltransferase family. XGPT subfamily. As to quaternary structure, homotetramer. Mg(2+) serves as cofactor.

It localises to the cell inner membrane. It catalyses the reaction GMP + diphosphate = guanine + 5-phospho-alpha-D-ribose 1-diphosphate. The enzyme catalyses XMP + diphosphate = xanthine + 5-phospho-alpha-D-ribose 1-diphosphate. It carries out the reaction IMP + diphosphate = hypoxanthine + 5-phospho-alpha-D-ribose 1-diphosphate. It functions in the pathway purine metabolism; GMP biosynthesis via salvage pathway; GMP from guanine: step 1/1. Its pathway is purine metabolism; XMP biosynthesis via salvage pathway; XMP from xanthine: step 1/1. Purine salvage pathway enzyme that catalyzes the transfer of the ribosyl-5-phosphate group from 5-phospho-alpha-D-ribose 1-diphosphate (PRPP) to the N9 position of the 6-oxopurines guanine and xanthine to form the corresponding ribonucleotides GMP (guanosine 5'-monophosphate) and XMP (xanthosine 5'-monophosphate), with the release of PPi. To a lesser extent, also acts on hypoxanthine. In Rhizobium johnstonii (strain DSM 114642 / LMG 32736 / 3841) (Rhizobium leguminosarum bv. viciae), this protein is Xanthine-guanine phosphoribosyltransferase.